Reading from the N-terminus, the 191-residue chain is Ribosome maturation factor RimM (191 aa).

The region spanning 99–172 is the PRC barrel domain; the sequence is TDEFYQIDLI…FLVVDPVAAG (74 aa).

Belongs to the RimM family. In terms of assembly, binds ribosomal protein uS19.

Its subcellular location is the cytoplasm. In terms of biological role, an accessory protein needed during the final step in the assembly of 30S ribosomal subunit, possibly for assembly of the head region. Essential for efficient processing of 16S rRNA. May be needed both before and after RbfA during the maturation of 16S rRNA. It has affinity for free ribosomal 30S subunits but not for 70S ribosomes. The chain is Ribosome maturation factor RimM from Bartonella bacilliformis (strain ATCC 35685 / KC583 / Herrer 020/F12,63).